The chain runs to 262 residues: Type III pantothenate kinase (262 aa).

12–19 contacts ATP; sequence DIGNTSIA. Substrate-binding positions include Y94 and 109–112; that span reads GSDV. D111 functions as the Proton acceptor in the catalytic mechanism. A K(+)-binding site is contributed by D132. T135 is a binding site for ATP. T187 is a binding site for substrate.

The protein belongs to the type III pantothenate kinase family. Homodimer. NH4(+) is required as a cofactor. K(+) serves as cofactor.

The protein localises to the cytoplasm. The enzyme catalyses (R)-pantothenate + ATP = (R)-4'-phosphopantothenate + ADP + H(+). The protein operates within cofactor biosynthesis; coenzyme A biosynthesis; CoA from (R)-pantothenate: step 1/5. Functionally, catalyzes the phosphorylation of pantothenate (Pan), the first step in CoA biosynthesis. The sequence is that of Type III pantothenate kinase from Borrelia garinii subsp. bavariensis (strain ATCC BAA-2496 / DSM 23469 / PBi) (Borreliella bavariensis).